Here is a 264-residue protein sequence, read N- to C-terminus: MFDIGVNLTSSQFRSDREQVVARARQAGVTGLLLTGTSVEESEQACLLAAQYPDYCGSTAGVHPHDASGWNDDTADLIHQLAGREQVLAIGECGLDFNRNFSTPQEQEQAFSAQLAIAAERAMPVFLHCRDAHARFMALLTPWLDKLPAAVLHCFTGSGDELDDSLRAGLMIGITGWVCDERRGLALRALLPRIPDDRLLLETDAPYLLPRDLHPKPASRRNEPCFLPHIVRQVAAWRGQDAEWLGRNVDENARRIFRPGQRGE.

The a divalent metal cation site is built by E92, H128, and H153.

It belongs to the metallo-dependent hydrolases superfamily. TatD-type hydrolase family. TatD subfamily. As to quaternary structure, monomer. The cofactor is Mg(2+).

The protein localises to the cytoplasm. In terms of biological role, 3'-5' exonuclease that prefers single-stranded DNA and RNA. May play a role in the H(2)O(2)-induced DNA damage repair. The sequence is that of 3'-5' ssDNA/RNA exonuclease TatD from Dickeya dadantii (strain 3937) (Erwinia chrysanthemi (strain 3937)).